A 421-amino-acid chain; its full sequence is Early growth response protein 2 (421 aa).

Residues 127-145 show a composition bias toward low complexity; sequence CSSTSSSNASSGSPNLSCS. Disordered stretches follow at residues 127 to 152, 179 to 200, and 223 to 288; these read CSST…PQSD, SPTA…ASDG, and SDRK…ERPY. Residues 236 to 247 show a composition bias toward polar residues; it reads PLSTIRNFTLGG. C2H2-type zinc fingers lie at residues 288–312, 318–340, and 346–368; these read YPCP…IRIH, FQCR…IRTH, and FACD…TKIH.

The protein belongs to the EGR C2H2-type zinc-finger protein family.

It is found in the nucleus. In terms of biological role, sequence-specific DNA-binding transcription factor. The polypeptide is Early growth response protein 2 (egr2) (Xenopus laevis (African clawed frog)).